Consider the following 509-residue polypeptide: Fumarate hydratase, mitochondrial (509 aa).

The N-terminal 43 residues, 1–43 (MYRSARSLHRFSASLSDLRAAQRSIKARNVCPAPGLRHQTVRM), are a transit peptide targeting the mitochondrion. Residues 144 to 146 (SGT), 175 to 178 (HPND), 185 to 187 (SSN), and T233 each bind substrate. The active-site Proton donor/acceptor is the H234. S364 is a catalytic residue. Residues S365 and 370–372 (KVN) contribute to the substrate site.

This sequence belongs to the class-II fumarase/aspartase family. Fumarase subfamily. As to quaternary structure, homotetramer.

Its subcellular location is the mitochondrion. The protein localises to the cytoplasm. It is found in the cytosol. It localises to the nucleus. The protein resides in the chromosome. It carries out the reaction (S)-malate = fumarate + H2O. The protein operates within carbohydrate metabolism; tricarboxylic acid cycle; (S)-malate from fumarate: step 1/1. Catalyzes the reversible stereospecific interconversion of fumarate to L-malate. Experiments in other species have demonstrated that specific isoforms of this protein act in defined pathways and favor one direction over the other. Its function is as follows. Catalyzes the hydration of fumarate to L-malate in the tricarboxylic acid (TCA) cycle to facilitate a transition step in the production of energy in the form of NADH. In terms of biological role, catalyzes the dehydration of L-malate to fumarate. Fumarate metabolism in the cytosol plays a role during urea cycle and arginine metabolism; fumarate being a by-product of the urea cycle and amino-acid catabolism. Also plays a role in DNA repair by promoting non-homologous end-joining (NHEJ). In response to DNA damage translocates to the nucleus and accumulates at DNA double-strand breaks (DSBs): acts by catalyzing formation of fumarate. The polypeptide is Fumarate hydratase, mitochondrial (Danio rerio (Zebrafish)).